A 166-amino-acid chain; its full sequence is Nucleotide-binding protein CV_2047 (166 aa).

This sequence belongs to the YajQ family.

Its function is as follows. Nucleotide-binding protein. This chain is Nucleotide-binding protein CV_2047, found in Chromobacterium violaceum (strain ATCC 12472 / DSM 30191 / JCM 1249 / CCUG 213 / NBRC 12614 / NCIMB 9131 / NCTC 9757 / MK).